The primary structure comprises 446 residues: tRNA modification GTPase MnmE (446 aa).

(6S)-5-formyl-5,6,7,8-tetrahydrofolate is bound by residues Arg-24, Glu-81, and Lys-120. The TrmE-type G domain maps to 216–368 (GLHAVLIGPP…LHIRLRALAL (153 aa)). Position 226 (Asn-226) interacts with K(+). GTP contacts are provided by residues 226–231 (NAGKSS), 245–251 (TDVAGTT), and 270–273 (DTAG). Ser-230 contributes to the Mg(2+) binding site. Thr-245, Val-247, and Thr-250 together coordinate K(+). Thr-251 contacts Mg(2+). Lys-446 contacts (6S)-5-formyl-5,6,7,8-tetrahydrofolate.

This sequence belongs to the TRAFAC class TrmE-Era-EngA-EngB-Septin-like GTPase superfamily. TrmE GTPase family. As to quaternary structure, homodimer. Heterotetramer of two MnmE and two MnmG subunits. The cofactor is K(+).

Its subcellular location is the cytoplasm. Exhibits a very high intrinsic GTPase hydrolysis rate. Involved in the addition of a carboxymethylaminomethyl (cmnm) group at the wobble position (U34) of certain tRNAs, forming tRNA-cmnm(5)s(2)U34. This Xanthomonas euvesicatoria pv. vesicatoria (strain 85-10) (Xanthomonas campestris pv. vesicatoria) protein is tRNA modification GTPase MnmE.